Here is a 398-residue protein sequence, read N- to C-terminus: MKILVINCGSSSLKYQVFNMENEDVLAKGAIERIGIEGSFLKHEPAGGEEVKIEKDVTDHKAAFKMVVDAITDEGHGVLKDLKEIEAVGHRVVHGGEEFSGSVIIDDDVMNALESCINLAPLHNPPNIYGIEASKANMPGVPQVGVFDTAFHQTMPKKAYLYGIPYEYYEKHSVRRYGFHGTSHKYVASRAADMLGKPLEDLKLITCHLGNGASVAAINKGESVDTSMGLTPLEGLVMGTRSGSMDPSIIKFLMDKEGLSIDEVDNILNKKSGVLGLSGLSNDFRDLEEAAAEGNERAENTLEVFYYTVSKYIGSYLAALNGADAIIFTAGLGENSPSVREAVTENLSYAGIKVDKDKNQVRGKETDISTDDASTRVLVVPTNEELMIAREAKGLLGK.

A Mg(2+)-binding site is contributed by Asn7. Lys14 lines the ATP pocket. Substrate is bound at residue Arg91. The active-site Proton donor/acceptor is the Asp148. ATP is bound by residues 208–212 (HLGNG), 283–285 (DFR), and 331–335 (GLGEN). Glu384 contributes to the Mg(2+) binding site.

It belongs to the acetokinase family. In terms of assembly, homodimer. The cofactor is Mg(2+). Mn(2+) serves as cofactor.

The protein resides in the cytoplasm. It carries out the reaction acetate + ATP = acetyl phosphate + ADP. The protein operates within metabolic intermediate biosynthesis; acetyl-CoA biosynthesis; acetyl-CoA from acetate: step 1/2. Catalyzes the formation of acetyl phosphate from acetate and ATP. Can also catalyze the reverse reaction. The polypeptide is Acetate kinase (Natranaerobius thermophilus (strain ATCC BAA-1301 / DSM 18059 / JW/NM-WN-LF)).